Consider the following 454-residue polypeptide: Bifunctional protein GlmU (454 aa).

Residues 1–225 (MNIVILAAGM…IWETLGVNSK (225 aa)) form a pyrophosphorylase region. UDP-N-acetyl-alpha-D-glucosamine is bound by residues 6 to 9 (LAAG), Lys20, Gln71, 76 to 77 (GT), 98 to 100 (YGD), Gly135, Glu150, Asn165, and Asn223. Residue Asp100 coordinates Mg(2+). Asn223 serves as a coordination point for Mg(2+). Residues 226 to 246 (LQLAEVERIHQGNQARRLLEA) are linker. Positions 247-454 (GVTLLDPARI…WQRPVKQPKK (208 aa)) are N-acetyltransferase. Residues Arg329 and Lys347 each contribute to the UDP-N-acetyl-alpha-D-glucosamine site. The active-site Proton acceptor is His359. 2 residues coordinate UDP-N-acetyl-alpha-D-glucosamine: Tyr362 and Asn373. Acetyl-CoA is bound by residues Ala376, 382 to 383 (NY), Ser401, Ala419, and Arg436.

The protein in the N-terminal section; belongs to the N-acetylglucosamine-1-phosphate uridyltransferase family. It in the C-terminal section; belongs to the transferase hexapeptide repeat family. Homotrimer. The cofactor is Mg(2+).

It is found in the cytoplasm. It carries out the reaction alpha-D-glucosamine 1-phosphate + acetyl-CoA = N-acetyl-alpha-D-glucosamine 1-phosphate + CoA + H(+). The catalysed reaction is N-acetyl-alpha-D-glucosamine 1-phosphate + UTP + H(+) = UDP-N-acetyl-alpha-D-glucosamine + diphosphate. The protein operates within nucleotide-sugar biosynthesis; UDP-N-acetyl-alpha-D-glucosamine biosynthesis; N-acetyl-alpha-D-glucosamine 1-phosphate from alpha-D-glucosamine 6-phosphate (route II): step 2/2. It functions in the pathway nucleotide-sugar biosynthesis; UDP-N-acetyl-alpha-D-glucosamine biosynthesis; UDP-N-acetyl-alpha-D-glucosamine from N-acetyl-alpha-D-glucosamine 1-phosphate: step 1/1. It participates in bacterial outer membrane biogenesis; LPS lipid A biosynthesis. Catalyzes the last two sequential reactions in the de novo biosynthetic pathway for UDP-N-acetylglucosamine (UDP-GlcNAc). The C-terminal domain catalyzes the transfer of acetyl group from acetyl coenzyme A to glucosamine-1-phosphate (GlcN-1-P) to produce N-acetylglucosamine-1-phosphate (GlcNAc-1-P), which is converted into UDP-GlcNAc by the transfer of uridine 5-monophosphate (from uridine 5-triphosphate), a reaction catalyzed by the N-terminal domain. This chain is Bifunctional protein GlmU, found in Cupriavidus necator (strain ATCC 17699 / DSM 428 / KCTC 22496 / NCIMB 10442 / H16 / Stanier 337) (Ralstonia eutropha).